The sequence spans 331 residues: MTERPPSEAARSDPQLEGRDAAEASMAPPHLVLLNGVAKETSRAAAAEPPVIELGARGGPGGGPAGGGGAARDLKGRDAATAEARHRVPTTELCRPPGPAPAPAPASVTAELPGDGRMVQLSPPALAAPAAPGRALLYSLSQPLASLGSGFFGEPDAFPMFTTNNRVKRRPSPYEMEITDGPHTKVVRRIFTNSRERWRQQNVNGAFAELRKLIPTHPPDKKLSKNEILRLAMKYINFLAKLLNDQEEEGTQRAKTGKDPVVGAGGGGGGGGGGAPPDDLLQDVLSPNSSCGSSLDGAASPDSYTEEPAPKHTARSLHPAMLPAADGAGPR.

Basic and acidic residues predominate over residues 1–22 (MTERPPSEAARSDPQLEGRDAA). Disordered regions lie at residues 1–27 (MTER…ASMA) and 40–86 (ETSR…EARH). Ser-12 carries the phosphoserine modification. Residues 56-70 (ARGGPGGGPAGGGGA) are compositionally biased toward gly residues. Positions 72 to 86 (RDLKGRDAATAEARH) are enriched in basic and acidic residues. A phosphoserine mark is found at Ser-122 and Ser-172. Positions 187–239 (VRRIFTNSRERWRQQNVNGAFAELRKLIPTHPPDKKLSKNEILRLAMKYINFL) constitute a bHLH domain. Residues 249-331 (EGTQRAKTGK…LPAADGAGPR (83 aa)) form a disordered region. A compositionally biased stretch (gly residues) spans 263–275 (GAGGGGGGGGGGA).

In terms of assembly, efficient DNA binding requires dimerization with another bHLH protein. Forms heterodimers with TCF3. Binds to the LIM domain containing protein LMO2 and to DRG1. Can assemble in a complex with LDB1 and LMO2. Component of a TAL-1 complex composed at least of CBFA2T3, LDB1, TAL1 and TCF3. Interacts with SBNO2; this interaction inhibits TAL1 occupancy of the DCSTAMP promoter, leading to the activation of the DCSTAMP promoter by the transcription factor MITF. Phosphorylated on serine residues. Phosphorylation of Ser-122 is strongly stimulated by hypoxia. In terms of processing, ubiquitinated; subsequent to hypoxia-dependent phosphorylation of Ser-122, ubiquitination targets the protein for rapid degradation via the ubiquitin system. This process may be characteristic for microvascular endothelial cells, since it could not be observed in large vessel endothelial cells. In terms of tissue distribution, leukemic stem cell.

Its subcellular location is the nucleus. In terms of biological role, implicated in the genesis of hemopoietic malignancies. It may play an important role in hemopoietic differentiation. Serves as a positive regulator of erythroid differentiation. The sequence is that of T-cell acute lymphocytic leukemia protein 1 (TAL1) from Homo sapiens (Human).